Consider the following 123-residue polypeptide: UPF0102 protein VFMJ11_2324 (123 aa).

It belongs to the UPF0102 family.

This chain is UPF0102 protein VFMJ11_2324, found in Aliivibrio fischeri (strain MJ11) (Vibrio fischeri).